We begin with the raw amino-acid sequence, 1083 residues long: Error-prone DNA polymerase (1083 aa).

This sequence belongs to the DNA polymerase type-C family. DnaE2 subfamily.

The protein localises to the cytoplasm. The enzyme catalyses DNA(n) + a 2'-deoxyribonucleoside 5'-triphosphate = DNA(n+1) + diphosphate. Its function is as follows. DNA polymerase involved in damage-induced mutagenesis and translesion synthesis (TLS). It is not the major replicative DNA polymerase. This is Error-prone DNA polymerase from Xanthomonas axonopodis pv. citri (strain 306).